The primary structure comprises 102 residues: Small ribosomal subunit protein uS10 (102 aa).

It belongs to the universal ribosomal protein uS10 family. Part of the 30S ribosomal subunit.

In terms of biological role, involved in the binding of tRNA to the ribosomes. The protein is Small ribosomal subunit protein uS10 of Clostridium perfringens (strain ATCC 13124 / DSM 756 / JCM 1290 / NCIMB 6125 / NCTC 8237 / Type A).